The sequence spans 854 residues: Protein translocase subunit SecA (854 aa).

ATP is bound by residues Gln-81, 99-103, and Asp-487; that span reads GEGKT.

The protein belongs to the SecA family. As to quaternary structure, monomer and homodimer. Part of the essential Sec protein translocation apparatus which comprises SecA, SecYEG and auxiliary proteins SecDF. Other proteins may also be involved.

Its subcellular location is the cell membrane. The protein resides in the cytoplasm. It catalyses the reaction ATP + H2O + cellular proteinSide 1 = ADP + phosphate + cellular proteinSide 2.. Part of the Sec protein translocase complex. Interacts with the SecYEG preprotein conducting channel. Has a central role in coupling the hydrolysis of ATP to the transfer of proteins into and across the cell membrane, serving as an ATP-driven molecular motor driving the stepwise translocation of polypeptide chains across the membrane. The chain is Protein translocase subunit SecA from Mycoplasma mobile (strain ATCC 43663 / 163K / NCTC 11711) (Mesomycoplasma mobile).